A 223-amino-acid polypeptide reads, in one-letter code: Small ribosomal subunit protein uS3 (223 aa).

Residues 38 to 106 enclose the KH type-2 domain; the sequence is IREFIAKQLT…RVHINIVEIK (69 aa).

It belongs to the universal ribosomal protein uS3 family. In terms of assembly, part of the 30S ribosomal subunit. Forms a tight complex with proteins S10 and S14.

Functionally, binds the lower part of the 30S subunit head. Binds mRNA in the 70S ribosome, positioning it for translation. The sequence is that of Small ribosomal subunit protein uS3 from Pediococcus pentosaceus (strain ATCC 25745 / CCUG 21536 / LMG 10740 / 183-1w).